The chain runs to 672 residues: DNA ligase (672 aa).

NAD(+) is bound by residues 32–36 (DAEYD), 81–82 (SL), and Glu-113. Lys-115 functions as the N6-AMP-lysine intermediate in the catalytic mechanism. NAD(+)-binding residues include Arg-136, Glu-173, Lys-290, and Lys-314. Cys-408, Cys-411, Cys-426, and Cys-432 together coordinate Zn(2+). Residues 592–672 (EIDSPFAGKT…EMIRLLGESS (81 aa)) form the BRCT domain.

It belongs to the NAD-dependent DNA ligase family. LigA subfamily. Mg(2+) is required as a cofactor. The cofactor is Mn(2+).

It catalyses the reaction NAD(+) + (deoxyribonucleotide)n-3'-hydroxyl + 5'-phospho-(deoxyribonucleotide)m = (deoxyribonucleotide)n+m + AMP + beta-nicotinamide D-nucleotide.. DNA ligase that catalyzes the formation of phosphodiester linkages between 5'-phosphoryl and 3'-hydroxyl groups in double-stranded DNA using NAD as a coenzyme and as the energy source for the reaction. It is essential for DNA replication and repair of damaged DNA. The protein is DNA ligase of Yersinia enterocolitica serotype O:8 / biotype 1B (strain NCTC 13174 / 8081).